Here is a 599-residue protein sequence, read N- to C-terminus: Aspartate--tRNA(Asp/Asn) ligase (599 aa).

Position 173 (Glu-173) interacts with L-aspartate. The segment at 197-200 (QLYK) is aspartate. Position 219 (Arg-219) interacts with L-aspartate. Residues 219–221 (RDE) and Gln-228 contribute to the ATP site. His-451 is a binding site for L-aspartate. Glu-484 serves as a coordination point for ATP. Residue Arg-491 coordinates L-aspartate. 536-539 (GLDR) lines the ATP pocket.

This sequence belongs to the class-II aminoacyl-tRNA synthetase family. Type 1 subfamily. As to quaternary structure, homodimer.

The protein localises to the cytoplasm. It catalyses the reaction tRNA(Asx) + L-aspartate + ATP = L-aspartyl-tRNA(Asx) + AMP + diphosphate. Its function is as follows. Aspartyl-tRNA synthetase with relaxed tRNA specificity since it is able to aspartylate not only its cognate tRNA(Asp) but also tRNA(Asn). Reaction proceeds in two steps: L-aspartate is first activated by ATP to form Asp-AMP and then transferred to the acceptor end of tRNA(Asp/Asn). The polypeptide is Aspartate--tRNA(Asp/Asn) ligase (Methylococcus capsulatus (strain ATCC 33009 / NCIMB 11132 / Bath)).